A 427-amino-acid chain; its full sequence is Imidazolonepropionase (427 aa).

Histidine 78 and histidine 80 together coordinate Fe(3+). Positions 78 and 80 each coordinate Zn(2+). Residues arginine 87, tyrosine 150, and histidine 183 each coordinate 4-imidazolone-5-propanoate. Tyrosine 150 contacts N-formimidoyl-L-glutamate. Histidine 255 is a Fe(3+) binding site. Histidine 255 serves as a coordination point for Zn(2+). Glutamate 258 provides a ligand contact to 4-imidazolone-5-propanoate. Aspartate 330 lines the Fe(3+) pocket. Aspartate 330 lines the Zn(2+) pocket. N-formimidoyl-L-glutamate is bound by residues asparagine 332 and glycine 334. Threonine 335 contributes to the 4-imidazolone-5-propanoate binding site.

The protein belongs to the metallo-dependent hydrolases superfamily. HutI family. The cofactor is Zn(2+). Requires Fe(3+) as cofactor.

Its subcellular location is the cytoplasm. The enzyme catalyses 4-imidazolone-5-propanoate + H2O = N-formimidoyl-L-glutamate. The protein operates within amino-acid degradation; L-histidine degradation into L-glutamate; N-formimidoyl-L-glutamate from L-histidine: step 3/3. In terms of biological role, catalyzes the hydrolytic cleavage of the carbon-nitrogen bond in imidazolone-5-propanoate to yield N-formimidoyl-L-glutamate. It is the third step in the universal histidine degradation pathway. This is Imidazolonepropionase from Herpetosiphon aurantiacus (strain ATCC 23779 / DSM 785 / 114-95).